The chain runs to 262 residues: Lysine 5,6-aminomutase beta subunit (262 aa).

The B12-binding domain occupies 120-262 (KIVVVGASTG…VKTLNDRMNS (143 aa)). Residues 130-136 (TDAHTVG) and His133 contribute to the adenosylcob(III)alamin site. Lys144 is modified (N6-(pyridoxal phosphate)lysine). Residues 185–192 (LVSQTVTQ), 219–223 (LCGGP), and 239–244 (FGPGRF) each bind adenosylcob(III)alamin.

It belongs to the KamE family. As to quaternary structure, heterotetramer of 2 alpha and 2 beta subunits. Adenosylcob(III)alamin is required as a cofactor. Requires pyridoxal 5'-phosphate as cofactor.

It carries out the reaction (3S)-3,6-diaminohexanoate = (3S,5S)-3,5-diaminohexanoate. The catalysed reaction is D-lysine = (2R,5S)-2,5-diaminohexanoate. The protein operates within amino-acid metabolism; lysine degradation. With respect to regulation, rapidly inactivated in the presence of D-lysine and to a lesser extent in the absence of adenosylcobalamin (Adocbl). Activity is stable in the presence of Adocbl when D-lysine is absent. Adocbl imparts thermal stability at 37 degrees Celsius. In terms of biological role, catalyzes the migration of the L-beta-lysine and D-lysine epsilon amino group to the delta carbon to produce 3,5-diaminohexanoate and 2,5-diaminohexanoate, respectively. The sequence is that of Lysine 5,6-aminomutase beta subunit (kamE) from Acetoanaerobium sticklandii (strain ATCC 12662 / DSM 519 / JCM 1433 / CCUG 9281 / NCIMB 10654 / HF) (Clostridium sticklandii).